A 382-amino-acid polypeptide reads, in one-letter code: D-galactonate dehydratase (382 aa).

D183 provides a ligand contact to Mg(2+). H185 acts as the Proton donor in catalysis. 2 residues coordinate Mg(2+): E209 and E235. H285 acts as the Proton acceptor in catalysis.

Belongs to the mandelate racemase/muconate lactonizing enzyme family. GalD subfamily. Mg(2+) serves as cofactor.

The enzyme catalyses D-galactonate = 2-dehydro-3-deoxy-D-galactonate + H2O. It participates in carbohydrate acid metabolism; D-galactonate degradation; D-glyceraldehyde 3-phosphate and pyruvate from D-galactonate: step 1/3. In terms of biological role, catalyzes the dehydration of D-galactonate to 2-keto-3-deoxy-D-galactonate. The chain is D-galactonate dehydratase from Escherichia coli (strain UTI89 / UPEC).